A 473-amino-acid chain; its full sequence is Cannabinoid receptor 1 (473 aa).

Topologically, residues 1–117 are extracellular; sequence MKSILDGLAD…CFMILNPSQQ (117 aa). Residues 2–23 form a required for mitochondrial localization region; the sequence is KSILDGLADTTFRTITTDLLYV. 2 N-linked (GlcNAc...) asparagine glycosylation sites follow: Asn78 and Asn84. The helical transmembrane segment at 118 to 143 threads the bilayer; the sequence is LAIAVLSLTLGTFTVLENLLVLCVIL. The Cytoplasmic segment spans residues 144-155; that stretch reads HSRSLRCRPSYH. A helical transmembrane segment spans residues 156–176; the sequence is FIGSLAVADLLGSVIFVYSFV. Residues 177 to 188 are Extracellular-facing; that stretch reads DFHVFHRKDSPN. A helical membrane pass occupies residues 189–213; it reads VFLFKLGGVTASFTASVGSLFLTAI. Residues 214–233 lie on the Cytoplasmic side of the membrane; sequence DRYISIHRPLAYKRIVTRPK. Residues 234 to 256 traverse the membrane as a helical segment; the sequence is AVVAFCLMWTIAIVIAVLPLLGW. Residues 257–274 are Extracellular-facing; sequence NCKKLQSVCSDIFPLIDE. Residues 275–300 traverse the membrane as a helical segment; that stretch reads TYLMFWIGVTSVLLLFIVYAYMYILW. Topologically, residues 301–345 are cytoplasmic; the sequence is KAHSHAVRMIQRGTQKSIIIHTSEDGKVQVTRPDQARMDIRLAKT. The helical transmembrane segment at 346-366 threads the bilayer; it reads LVLILVVLIICWGPLLAIMVY. The Extracellular segment spans residues 367–378; it reads DVFGKMNKLIKT. A helical membrane pass occupies residues 379–400; the sequence is VFAFCSMLCLLNSTVNPIIYAL. Topologically, residues 401 to 473 are cytoplasmic; the sequence is RSKDLRHAFR…VSTDTSAEAL (73 aa). Cys416 carries S-palmitoyl cysteine lipidation. Ser426 and Ser430 each carry phosphoserine.

The protein belongs to the G-protein coupled receptor 1 family. As to quaternary structure, interacts (via C-terminus) with CNRIP1. Associates with G protein alpha subunits, including G(i) alpha-1/GNAI1, G(i) alpha-3/GNAI3 and G(o)-alpha/GNAO1; palmitoylation is important for interaction with GNAI3 and GNAO1. In terms of processing, palmitoylation at Cys-416 is important for recruitment at both plasma membrane and lipid rafts and association with G protein alpha subunits. As to expression, expressed in the brain, in the striatum, medial septum, descending arm of the band of Broca, the amygdaloid nucleus, the hippocampus and cortex (at protein level). High levels in the lateral striatum. In rostral brain regions, high expression levels in the dorsal lateral striatum, while in the caudal brain regions, high levels are observed in the ventral lateral striatum. Expressed in monocytes/macrophages (at protein level). Expressed in striated muscles and in vascular smooth muscles cells (at protein level).

It localises to the cell membrane. The protein localises to the mitochondrion outer membrane. The protein resides in the cell projection. Its subcellular location is the axon. It is found in the presynapse. With respect to regulation, hemopressin, a peptide derived from hemoglobin subunit alpha (HBA1 and/or HBA2), acts as an antagonist peptide: hemopressin-binding efficiently blocks cannabinoid receptor CNR1 and subsequent signaling. In terms of biological role, G-protein coupled receptor for cannabinoids, including endocannabinoids (eCBs), such as N-arachidonoylethanolamide (also called anandamide or AEA) and 2-arachidonoylglycerol (2-AG). Mediates many cannabinoid-induced effects, acting, among others, on food intake, memory loss, gastrointestinal motility, catalepsy, ambulatory activity, anxiety, chronic pain. Signaling typically involves reduction in cyclic AMP. In the hypothalamus, may have a dual effect on mitochondrial respiration depending upon the agonist dose and possibly upon the cell type. Increases respiration at low doses, while decreases respiration at high doses. At high doses, CNR1 signal transduction involves G-protein alpha-i protein activation and subsequent inhibition of mitochondrial soluble adenylate cyclase, decrease in cyclic AMP concentration, inhibition of protein kinase A (PKA)-dependent phosphorylation of specific subunits of the mitochondrial electron transport system, including NDUFS2. In the hypothalamus, inhibits leptin-induced reactive oxygen species (ROS) formation and mediates cannabinoid-induced increase in SREBF1 and FASN gene expression. In response to cannabinoids, drives the release of orexigenic beta-endorphin, but not that of melanocyte-stimulating hormone alpha/alpha-MSH, from hypothalamic POMC neurons, hence promoting food intake. In the hippocampus, regulates cellular respiration and energy production in response to cannabinoids. Involved in cannabinoid-dependent depolarization-induced suppression of inhibition (DSI), a process in which depolarization of CA1 postsynaptic pyramidal neurons mobilizes eCBs, which retrogradely activate presynaptic CB1 receptors, transiently decreasing GABAergic inhibitory neurotransmission. Also reduces excitatory synaptic transmission. In superior cervical ganglions and cerebral vascular smooth muscle cells, inhibits voltage-gated Ca(2+) channels in a constitutive, as well as agonist-dependent manner. Induces leptin production in adipocytes and reduces LRP2-mediated leptin clearance in the kidney, hence participating in hyperleptinemia. In adipose tissue, CNR1 signaling leads to increased expression of SREBF1, ACACA and FASN genes. In the liver, activation by endocannabinoids leads to increased de novo lipogenesis and reduced fatty acid catabolism, associated with increased expression of SREBF1/SREBP-1, GCK, ACACA, ACACB and FASN genes. May also affect de novo cholesterol synthesis and HDL-cholesteryl ether uptake. Peripherally modulates energy metabolism. In high carbohydrate diet-induced obesity, may decrease the expression of mitochondrial dihydrolipoyl dehydrogenase/DLD in striated muscles, as well as that of selected glucose/ pyruvate metabolic enzymes, hence affecting energy expenditure through mitochondrial metabolism. In response to cannabinoid anandamide, elicits a pro-inflammatory response in macrophages, which involves NLRP3 inflammasome activation and IL1B and IL18 secretion. In macrophages infiltrating pancreatic islets, this process may participate in the progression of type-2 diabetes and associated loss of pancreatic beta-cells. This chain is Cannabinoid receptor 1 (Cnr1), found in Rattus norvegicus (Rat).